A 464-amino-acid chain; its full sequence is UDP-glycosyltransferase 76C1 (464 aa).

UDP-alpha-D-glucose contacts are provided by residues S279, 338–340 (APQ), 355–363 (HNGWNSTLE), and 377–380 (KWDQ).

It belongs to the UDP-glycosyltransferase family.

Its activity is regulated as follows. Inhibited by olomoucine and 3-isobutyl-1-methylxanthine. Involved in the N-glucosylation of cytokinins. Catalyzes the formation of both the 7-N and the 9-N-glucosides. This is UDP-glycosyltransferase 76C1 (UGT76C1) from Arabidopsis thaliana (Mouse-ear cress).